Consider the following 484-residue polypeptide: UDP-N-acetylmuramate--L-alanine ligase (484 aa).

ATP is bound at residue 124–130 (GTHGKTT).

The protein belongs to the MurCDEF family.

It localises to the cytoplasm. It carries out the reaction UDP-N-acetyl-alpha-D-muramate + L-alanine + ATP = UDP-N-acetyl-alpha-D-muramoyl-L-alanine + ADP + phosphate + H(+). It participates in cell wall biogenesis; peptidoglycan biosynthesis. Its function is as follows. Cell wall formation. The protein is UDP-N-acetylmuramate--L-alanine ligase of Pseudoalteromonas atlantica (strain T6c / ATCC BAA-1087).